A 343-amino-acid chain; its full sequence is UDP-3-O-acylglucosamine N-acyltransferase 2 (343 aa).

Residue His-251 is the Proton acceptor of the active site.

This sequence belongs to the transferase hexapeptide repeat family. LpxD subfamily. In terms of assembly, homotrimer.

The enzyme catalyses a UDP-3-O-[(3R)-3-hydroxyacyl]-alpha-D-glucosamine + a (3R)-hydroxyacyl-[ACP] = a UDP-2-N,3-O-bis[(3R)-3-hydroxyacyl]-alpha-D-glucosamine + holo-[ACP] + H(+). It participates in bacterial outer membrane biogenesis; LPS lipid A biosynthesis. Catalyzes the N-acylation of UDP-3-O-acylglucosamine using 3-hydroxyacyl-ACP as the acyl donor. Is involved in the biosynthesis of lipid A, a phosphorylated glycolipid that anchors the lipopolysaccharide to the outer membrane of the cell. The protein is UDP-3-O-acylglucosamine N-acyltransferase 2 of Legionella pneumophila (strain Paris).